Consider the following 171-residue polypeptide: NADH-quinone oxidoreductase subunit I 2 (171 aa).

4Fe-4S ferredoxin-type domains are found at residues 39–71 (IVLTRDPDGQERCVACNLCAVACPVGCIDLSKA) and 81–110 (EHFRINFARCIFCGYCEEACPTAAIQLTPD). Positions 51, 54, 57, 61, 90, 93, 96, and 100 each coordinate [4Fe-4S] cluster.

The protein belongs to the complex I 23 kDa subunit family. NDH-1 is composed of 14 different subunits. Subunits NuoA, H, J, K, L, M, N constitute the membrane sector of the complex. [4Fe-4S] cluster serves as cofactor.

The protein resides in the cell inner membrane. It carries out the reaction a quinone + NADH + 5 H(+)(in) = a quinol + NAD(+) + 4 H(+)(out). Functionally, NDH-1 shuttles electrons from NADH, via FMN and iron-sulfur (Fe-S) centers, to quinones in the respiratory chain. The immediate electron acceptor for the enzyme in this species is believed to be ubiquinone. Couples the redox reaction to proton translocation (for every two electrons transferred, four hydrogen ions are translocated across the cytoplasmic membrane), and thus conserves the redox energy in a proton gradient. This Rhodopseudomonas palustris (strain BisB18) protein is NADH-quinone oxidoreductase subunit I 2.